The sequence spans 283 residues: Polyamine aminopropyltransferase (283 aa).

The PABS domain occupies 2-238 (ELWYTEEWTE…GHWLFGFASK (237 aa)). Glutamine 31 contacts S-methyl-5'-thioadenosine. Spermidine contacts are provided by histidine 62 and aspartate 86. Residues glutamate 106 and 137 to 138 (DG) contribute to the S-methyl-5'-thioadenosine site. Aspartate 156 serves as the catalytic Proton acceptor. Position 156–159 (156–159 (DSTD)) interacts with spermidine. Proline 163 contacts S-methyl-5'-thioadenosine.

It belongs to the spermidine/spermine synthase family. Homodimer or homotetramer.

Its subcellular location is the cytoplasm. It catalyses the reaction S-adenosyl 3-(methylsulfanyl)propylamine + putrescine = S-methyl-5'-thioadenosine + spermidine + H(+). It participates in amine and polyamine biosynthesis; spermidine biosynthesis; spermidine from putrescine: step 1/1. In terms of biological role, catalyzes the irreversible transfer of a propylamine group from the amino donor S-adenosylmethioninamine (decarboxy-AdoMet) to putrescine (1,4-diaminobutane) to yield spermidine. The chain is Polyamine aminopropyltransferase from Clostridioides difficile (strain 630) (Peptoclostridium difficile).